The chain runs to 116 residues: Large ribosomal subunit protein bL17 (116 aa).

Belongs to the bacterial ribosomal protein bL17 family. Part of the 50S ribosomal subunit. Contacts protein L32.

This is Large ribosomal subunit protein bL17 from Synechococcus elongatus (strain ATCC 33912 / PCC 7942 / FACHB-805) (Anacystis nidulans R2).